The chain runs to 218 residues: Adenylate kinase (218 aa).

An ATP-binding site is contributed by 10 to 15 (GAGKGT). An NMP region spans residues 30–59 (STGDMLRAAVQAQTPVGIEAKKVMDAGKLV). Residues T31, R36, 57–59 (KLV), 85–88 (GFPR), and Q92 contribute to the AMP site. The LID stretch occupies residues 122 to 159 (GRRVHLSSGRTYHVRFNPPKKEGLDDLTGEPLVQREDD). ATP-binding positions include R123 and 132–133 (TY). Positions 156 and 167 each coordinate AMP. G203 serves as a coordination point for ATP.

It belongs to the adenylate kinase family. In terms of assembly, monomer.

Its subcellular location is the cytoplasm. The enzyme catalyses AMP + ATP = 2 ADP. The protein operates within purine metabolism; AMP biosynthesis via salvage pathway; AMP from ADP: step 1/1. In terms of biological role, catalyzes the reversible transfer of the terminal phosphate group between ATP and AMP. Plays an important role in cellular energy homeostasis and in adenine nucleotide metabolism. The protein is Adenylate kinase of Chlorobium phaeobacteroides (strain DSM 266 / SMG 266 / 2430).